Reading from the N-terminus, the 237-residue chain is Methylthioribulose-1-phosphate dehydratase (237 aa).

Cys97 provides a ligand contact to substrate. Zn(2+)-binding residues include His114 and His116. Glu143 functions as the Proton donor/acceptor in the catalytic mechanism. Zn(2+) is bound at residue His199.

This sequence belongs to the aldolase class II family. MtnB subfamily. Requires Zn(2+) as cofactor.

It localises to the cytoplasm. The catalysed reaction is 5-(methylsulfanyl)-D-ribulose 1-phosphate = 5-methylsulfanyl-2,3-dioxopentyl phosphate + H2O. It functions in the pathway amino-acid biosynthesis; L-methionine biosynthesis via salvage pathway; L-methionine from S-methyl-5-thio-alpha-D-ribose 1-phosphate: step 2/6. In terms of biological role, catalyzes the dehydration of methylthioribulose-1-phosphate (MTRu-1-P) into 2,3-diketo-5-methylthiopentyl-1-phosphate (DK-MTP-1-P). The sequence is that of Methylthioribulose-1-phosphate dehydratase from Coccidioides posadasii (strain C735) (Valley fever fungus).